We begin with the raw amino-acid sequence, 166 residues long: Podoplanin (166 aa).

A signal peptide spans 1–22; the sequence is MWTAPVLLWVLGSVWFWDSAQG. Over 23 to 135 the chain is Extracellular; that stretch reads GAIGALEDDL…KKDGLAVVTL (113 aa). 4 O-linked (GalNAc...) threonine glycosylation sites follow: threonine 34, threonine 52, threonine 55, and threonine 56. Over residues 54 to 63 the composition is skewed to basic and acidic residues; that stretch reads DTTGELDKST. Residues 54–124 form a disordered region; it reads DTTGELDKST…DNAGGETQTT (71 aa). O-linked (GalNAc...) serine glycosylation is present at serine 62. Threonine 63, threonine 71, and threonine 80 each carry an O-linked (GalNAc...) threonine glycan. An O-linked (GalNAc...) serine glycan is attached at serine 81. Threonine 83 carries an O-linked (GalNAc...) threonine glycan. A glycan (O-linked (GalNAc...) serine) is linked at serine 84. The span at 84-93 shows a compositional bias: basic and acidic residues; the sequence is SDHDHKEHES. 7 O-linked (GalNAc...) threonine glycosylation sites follow: threonine 94, threonine 95, threonine 96, threonine 101, threonine 105, threonine 109, and threonine 110. The segment covering 94–103 has biased composition (polar residues); that stretch reads TTTVKAVTSH. Over residues 104-114 the composition is skewed to basic and acidic residues; the sequence is STDKKTTHPNR. Residues 136 to 156 form a helical membrane-spanning segment; that stretch reads VGIIIGVLLAIGFIGGIIIVV. Positions 137–141 are requires for dimerization and lipid rafts association; the sequence is GIIIG. At 157-166 the chain is on the cytoplasmic side; that stretch reads MRKISGRFSP. The segment at 158–159 is requires for interaction with MSN and EZR; it reads RK.

The protein belongs to the podoplanin family. Homodimer. Interacts with CLEC1B; the interaction is independent of CLEC1B glycosylation and activates CLEC1B; the interaction is dependent of sialic acid on O-glycans. Interacts with CD9; this interaction is homophilic and attenuates platelet aggregation and pulmonary metastasis induced by PDPN. Interacts with LGALS8; the interaction is glycosylation-dependent; may participate in connection of the lymphatic endothelium to the surrounding extracellular matrix. Interacts with HSPA9. Interacts (via extracellular domain) with CD44; this interaction is required for PDPN-mediated directional migration and regulation of lamellipodia extension/stabilization during cell spreading and migration. Interacts (via cytoplasmic domain) with MSN and EZR; activates RHOA and promotes epithelial-mesenchymal transition. Interacts with CCL21; relocalized PDPN to the basolateral membrane. Extensively O-glycosylated. Contains sialic acid residues. O-glycosylation is necessary for platelet aggregation activity. Disialylated at Thr-52; sialic acid is critical for platelet-aggregating activity and for CLEC1B interaction. In terms of processing, the N-terminus is blocked. In adult kidney, expressed on the urinary surface and foot processes of podocytes and in parietal epithelial cells of Bowman's capsule where it is localized to luminal surfaces. In lung, expressed exclusively on luminal surfaces of type I alveolar epithelial cells and pleural mesothelial cells. Not expressed in type II alveolar cells. In bone, expressed in osteocytes and osteoblasts. In spleen, liver, stomach and intestine, expressed in mesoepithelium. Also expressed in thymic epithelial cells, choroid plexus and leptomeninges.

It localises to the membrane. The protein resides in the cell projection. It is found in the lamellipodium membrane. The protein localises to the filopodium membrane. Its subcellular location is the microvillus membrane. It localises to the ruffle membrane. The protein resides in the membrane raft. It is found in the apical cell membrane. The protein localises to the basolateral cell membrane. Its subcellular location is the invadopodium. Its function is as follows. Mediates effects on cell migration and adhesion through its different partners. During development plays a role in blood and lymphatic vessels separation by binding CLEC1B, triggering CLEC1B activation in platelets and leading to platelet activation and/or aggregation. Interaction with CD9, on the contrary, attenuates platelet aggregation and pulmonary metastasis induced by PDPN. Mediates effects on cell migration and adhesion through its different partners. Through MSN or EZR interaction promotes epithelial-mesenchymal transition (EMT) leading to ERZ phosphorylation and triggering RHOA activation leading to cell migration increase and invasiveness. Interaction with CD44 promotes directional cell migration in epithelial and tumor cells. In lymph nodes (LNs), controls fibroblastic reticular cells (FRCs) adhesion to the extracellular matrix (ECM) and contraction of the actomyosin by maintaining ERM proteins (EZR; MSN and RDX) and MYL9 activation through association with unknown transmembrane proteins. Engagement of CLEC1B by PDPN promotes FRCs relaxation by blocking lateral membrane interactions leading to reduction of ERM proteins (EZR; MSN and RDX) and MYL9 activation. Through binding with LGALS8 may participate in connection of the lymphatic endothelium to the surrounding extracellular matrix. In keratinocytes, induces changes in cell morphology showing an elongated shape, numerous membrane protrusions, major reorganization of the actin cytoskeleton, increased motility and decreased cell adhesion. Controls invadopodia stability and maturation leading to efficient degradation of the extracellular matrix (ECM) in tumor cells through modulation of RHOC activity in order to activate ROCK1/ROCK2 and LIMK1/LIMK2 and inactivation of CFL1. Required for normal lung cell proliferation and alveolus formation at birth. Does not function as a water channel or as a regulator of aquaporin-type water channels. Does not have any effect on folic acid or amino acid transport. In Rattus norvegicus (Rat), this protein is Podoplanin.